The sequence spans 785 residues: MDPRVAWIQPEQKGPANALWMQIWETSQGVGRGGSGFASYFCLNSPALDTAAAPGAAGRAAPAAGGPGPAPAASSPPPAPGPAALPPALLTALGPAADSARRLHKSPSLSSSSSSSSSNAESGTESPGCSSSSSSSTSLGRAGSGRTFFSFADGAAHAHPGPRGSTPAGSPPQHQFHPGRRKRENKASTYGLNYLLSGSRAATLSGGGGPGAQAARPGTPWKSRAYSPGIQGLHEEIIDFYNFMSPCPEEAAMRREVVKRIETVVKDLWPTADVQIFGSFSTGLYLPTSDIDLVVFGKWERPPLQLLEQALRKHNVAEPCSIKVLDKATVPIIKLTDQETEVKVDISFNMETGVRAAEFIKNYMKKYSLLPYLILVLKQFLLQRDLNEVFTGGISSYSLILMAISFLQLHPRIDARRADENLGMLLVEFFELYGRNFNYLKTGIRIKEGGAYIAKEEIMKAMTSGYRPSMLCIEDPLLPGNDVGRSSYGAMQVKQVFDYAYIVLSHAVSPLARSYPNRDSESTLGRIIKVTQEVIDYRRWIKEKWGSRILPSPDLDNRIKIKERITTCNGEQMQSREPSSPYTQRLTLSLSSPQLLSSGSSASSVSSLSGSDIDSDTPPCTTPSVYQFSLQAPTTLMASLPTALPMPSSKPQPAASRTLIMTTNNQTRVTIPPPTLGVAPVPCRQAGVDGTTSLKAVHSVTSPAIPSASPNPLSSPHLYHKQHNGMKLSMKGSHNHTQGGGYSSVGSGAVRPPVGNRGHHQYNRTGWRRKKHAHTRDSLPVSLSR.

A disordered region spans residues 56 to 184 (AAGRAAPAAG…QFHPGRRKRE (129 aa)). The segment covering 68–85 (GPAPAASSPPPAPGPAAL) has biased composition (pro residues). 2 stretches are compositionally biased toward low complexity: residues 86-98 (PPAL…PAAD) and 106-145 (SPSL…AGSG). Positions 290 and 292 each coordinate Mg(2+). ATP is bound by residues glycine 353, lysine 378, serine 396, and tyrosine 397. A PAP-associated domain is found at 421 to 480 (NLGMLLVEFFELYGRNFNYLKTGIRIKEGGAYIAKEEIMKAMTSGYRPSMLCIEDPLLPG). 2 residues coordinate ATP: asparagine 481 and arginine 485. Over residues 593–611 (PQLLSSGSSASSVSSLSGS) the composition is skewed to low complexity. 2 disordered regions span residues 593–625 (PQLL…TPSV) and 731–785 (KGSH…SLSR). Positions 757–774 (RGHHQYNRTGWRRKKHAH) are enriched in basic residues.

It belongs to the DNA polymerase type-B-like family. Component of a nuclear TRAMP-like complex, an ATP-dependent exosome regulatory complex consisting of a helicase (MTREX), an oligadenylate polymerase (TENT4B or TENT4A), and a substrate specific RNA-binding factor (ZCCHC7 or ZCCHC8). Several TRAMP-like complexes exist with specific compositions and are associated with nuclear, or nucleolar RNA exosomes. Mg(2+) serves as cofactor. It depends on Mn(2+) as a cofactor.

It localises to the cytoplasm. Its subcellular location is the nucleus. The protein localises to the nucleoplasm. The enzyme catalyses RNA(n) + ATP = RNA(n)-3'-adenine ribonucleotide + diphosphate. Functionally, terminal nucleotidyltransferase that catalyzes preferentially the transfer of ATP and GTP on RNA 3' poly(A) tail creating a heterogeneous 3' poly(A) tail leading to mRNAs stabilization by protecting mRNAs from active deadenylation. Also functions as a catalytic subunit of a TRAMP-like complex which has a poly(A) RNA polymerase activity and is involved in a post-transcriptional quality control mechanism. Polyadenylation with short oligo(A) tails is required for the degradative activity of the exosome on several of its nuclear RNA substrates. Has no terminal uridylyltransferase activity, and does not play a role in replication-dependent histone mRNA degradation via uridylation. The polypeptide is Terminal nucleotidyltransferase 4A (Mus musculus (Mouse)).